Reading from the N-terminus, the 257-residue chain is Probable septum site-determining protein MinC (257 aa).

Belongs to the MinC family. Interacts with MinD and FtsZ.

In terms of biological role, cell division inhibitor that blocks the formation of polar Z ring septums. Rapidly oscillates between the poles of the cell to destabilize FtsZ filaments that have formed before they mature into polar Z rings. Prevents FtsZ polymerization. This Burkholderia lata (strain ATCC 17760 / DSM 23089 / LMG 22485 / NCIMB 9086 / R18194 / 383) protein is Probable septum site-determining protein MinC.